Here is a 468-residue protein sequence, read N- to C-terminus: Adenosylhomocysteinase (468 aa).

Substrate contacts are provided by threonine 57, aspartate 132, and glutamate 194. 195–197 (TTT) is a binding site for NAD(+). Residues lysine 224 and aspartate 228 each contribute to the substrate site. NAD(+) contacts are provided by residues asparagine 229, 258-263 (GFGDVG), glutamate 281, asparagine 316, 337-339 (IGH), and asparagine 382.

This sequence belongs to the adenosylhomocysteinase family. The cofactor is NAD(+).

Its subcellular location is the cytoplasm. The catalysed reaction is S-adenosyl-L-homocysteine + H2O = L-homocysteine + adenosine. It functions in the pathway amino-acid biosynthesis; L-homocysteine biosynthesis; L-homocysteine from S-adenosyl-L-homocysteine: step 1/1. Its function is as follows. May play a key role in the regulation of the intracellular concentration of adenosylhomocysteine. This Methylorubrum populi (strain ATCC BAA-705 / NCIMB 13946 / BJ001) (Methylobacterium populi) protein is Adenosylhomocysteinase.